A 319-amino-acid polypeptide reads, in one-letter code: DNA-directed RNA polymerase subunit alpha (319 aa).

An alpha N-terminal domain (alpha-NTD) region spans residues 1 to 227; sequence MKEFIFPMKI…KHMNMLTNIS (227 aa). The tract at residues 242–319 is alpha C-terminal domain (alpha-CTD); it reads LMEKLTFSIE…NIGEQRSSEV (78 aa).

This sequence belongs to the RNA polymerase alpha chain family. Homodimer. The RNAP catalytic core consists of 2 alpha, 1 beta, 1 beta' and 1 omega subunit. When a sigma factor is associated with the core the holoenzyme is formed, which can initiate transcription.

It carries out the reaction RNA(n) + a ribonucleoside 5'-triphosphate = RNA(n+1) + diphosphate. In terms of biological role, DNA-dependent RNA polymerase catalyzes the transcription of DNA into RNA using the four ribonucleoside triphosphates as substrates. The protein is DNA-directed RNA polymerase subunit alpha of Hydrogenobaculum sp. (strain Y04AAS1).